Reading from the N-terminus, the 314-residue chain is Ribosomal RNA small subunit methyltransferase H (314 aa).

S-adenosyl-L-methionine contacts are provided by residues 35-37, Asp-55, Phe-79, Asp-101, and Gln-108; that span reads GGH.

The protein belongs to the methyltransferase superfamily. RsmH family.

Its subcellular location is the cytoplasm. The enzyme catalyses cytidine(1402) in 16S rRNA + S-adenosyl-L-methionine = N(4)-methylcytidine(1402) in 16S rRNA + S-adenosyl-L-homocysteine + H(+). Its function is as follows. Specifically methylates the N4 position of cytidine in position 1402 (C1402) of 16S rRNA. This is Ribosomal RNA small subunit methyltransferase H from Pectobacterium carotovorum subsp. carotovorum (strain PC1).